The sequence spans 120 residues: 2-amino-4-hydroxy-6-hydroxymethyldihydropteridine pyrophosphokinase (120 aa).

Belongs to the HPPK family.

It carries out the reaction 6-hydroxymethyl-7,8-dihydropterin + ATP = (7,8-dihydropterin-6-yl)methyl diphosphate + AMP + H(+). It functions in the pathway cofactor biosynthesis; tetrahydrofolate biosynthesis; 2-amino-4-hydroxy-6-hydroxymethyl-7,8-dihydropteridine diphosphate from 7,8-dihydroneopterin triphosphate: step 4/4. In terms of biological role, catalyzes the transfer of pyrophosphate from adenosine triphosphate (ATP) to 6-hydroxymethyl-7,8-dihydropterin, an enzymatic step in folate biosynthesis pathway. The chain is 2-amino-4-hydroxy-6-hydroxymethyldihydropteridine pyrophosphokinase (folK) from Pseudomonas putida (Arthrobacter siderocapsulatus).